A 230-amino-acid polypeptide reads, in one-letter code: 2,3-bisphosphoglycerate-dependent phosphoglycerate mutase (230 aa).

Residues 8–15 (RHGESEWN), 21–22 (TG), R60, 87–90 (ERHY), K98, 114–115 (RR), and 183–184 (GN) each bind substrate. H9 serves as the catalytic Tele-phosphohistidine intermediate. The active-site Proton donor/acceptor is the E87.

The protein belongs to the phosphoglycerate mutase family. BPG-dependent PGAM subfamily.

The catalysed reaction is (2R)-2-phosphoglycerate = (2R)-3-phosphoglycerate. It functions in the pathway carbohydrate degradation; glycolysis; pyruvate from D-glyceraldehyde 3-phosphate: step 3/5. Catalyzes the interconversion of 2-phosphoglycerate and 3-phosphoglycerate. This Streptococcus mutans serotype c (strain ATCC 700610 / UA159) protein is 2,3-bisphosphoglycerate-dependent phosphoglycerate mutase.